A 190-amino-acid polypeptide reads, in one-letter code: Elongation factor P (190 aa).

It belongs to the elongation factor P family.

It localises to the cytoplasm. The protein operates within protein biosynthesis; polypeptide chain elongation. In terms of biological role, involved in peptide bond synthesis. Stimulates efficient translation and peptide-bond synthesis on native or reconstituted 70S ribosomes in vitro. Probably functions indirectly by altering the affinity of the ribosome for aminoacyl-tRNA, thus increasing their reactivity as acceptors for peptidyl transferase. This is Elongation factor P from Bartonella bacilliformis (strain ATCC 35685 / KC583 / Herrer 020/F12,63).